Reading from the N-terminus, the 89-residue chain is Large ribosomal subunit protein bL27 (89 aa).

Residues 1–23 (MAHKKAGGSSRNGRDSHSKRLGV) form a disordered region.

The protein belongs to the bacterial ribosomal protein bL27 family.

The sequence is that of Large ribosomal subunit protein bL27 from Mesorhizobium japonicum (strain LMG 29417 / CECT 9101 / MAFF 303099) (Mesorhizobium loti (strain MAFF 303099)).